The chain runs to 682 residues: Methionine--tRNA ligase (682 aa).

A 'HIGH' region motif is present at residues 15–25 (PYANGAIHLGH). Positions 146, 149, 159, and 162 each coordinate Zn(2+). The 'KMSKS' region motif lies at 331 to 335 (KMSKS). Lys334 serves as a coordination point for ATP. Residues 580 to 682 (DLAKLDMRVA…NGVTAGMQVK (103 aa)) enclose the tRNA-binding domain.

It belongs to the class-I aminoacyl-tRNA synthetase family. MetG type 1 subfamily. As to quaternary structure, homodimer. Zn(2+) serves as cofactor.

The protein localises to the cytoplasm. The catalysed reaction is tRNA(Met) + L-methionine + ATP = L-methionyl-tRNA(Met) + AMP + diphosphate. Its function is as follows. Is required not only for elongation of protein synthesis but also for the initiation of all mRNA translation through initiator tRNA(fMet) aminoacylation. This is Methionine--tRNA ligase from Haemophilus influenzae (strain 86-028NP).